A 431-amino-acid polypeptide reads, in one-letter code: Glutamate-1-semialdehyde 2,1-aminomutase (431 aa).

An N6-(pyridoxal phosphate)lysine modification is found at Lys269.

It belongs to the class-III pyridoxal-phosphate-dependent aminotransferase family. HemL subfamily. Homodimer. Pyridoxal 5'-phosphate serves as cofactor.

Its subcellular location is the cytoplasm. It carries out the reaction (S)-4-amino-5-oxopentanoate = 5-aminolevulinate. It participates in porphyrin-containing compound metabolism; protoporphyrin-IX biosynthesis; 5-aminolevulinate from L-glutamyl-tRNA(Glu): step 2/2. The chain is Glutamate-1-semialdehyde 2,1-aminomutase from Francisella tularensis subsp. holarctica (strain FTNF002-00 / FTA).